The following is a 45-amino-acid chain: Osteocalcin 1 (45 aa).

Positions 1-41 (AAGQLSLTQLESLREVCELNLACEHMMDTEGIIAAYTAYYG) constitute a Gla domain. Residues glutamate 11, glutamate 15, glutamate 18, and glutamate 24 each contribute to the Ca(2+) site. Residues glutamate 11, glutamate 15, and glutamate 18 each carry the 4-carboxyglutamate modification. Cysteine 17 and cysteine 23 are joined by a disulfide.

Belongs to the osteocalcin/matrix Gla protein family. Post-translationally, gamma-carboxyglutamate residues are formed by vitamin K dependent carboxylation by GGCX. These residues are essential for the binding of calcium.

The protein localises to the secreted. Functionally, the carboxylated form is one of the main organic components of the bone matrix, which constitutes 1-2% of the total bone protein. The carboxylated form binds strongly to apatite and calcium. The protein is Osteocalcin 1 of Diplodus sargus (White seabream).